Here is a 105-residue protein sequence, read N- to C-terminus: Chloroacetanilide N-alkylformylase 1, ferredoxin component (105 aa).

Residues 2-105 (PTIIVTTRDG…GLRVAIAPED (104 aa)) enclose the 2Fe-2S ferredoxin-type domain. [2Fe-2S] cluster-binding residues include Cys-40, Cys-46, Cys-49, and Cys-86.

The protein belongs to the adrenodoxin/putidaredoxin family. The chloroacetanilide N-alkylformylase multicomponent enzyme system is composed of an oxygenase component (CndA) and an electron transfer component formed by a ferredoxin reductase (CndC1) and a ferredoxin (CndB1). In vitro, chloroacetanilide N-alkylformylase assays in which CndB1 is substituted for CndB2 demonstrate that the two enzymes possess nearly identical activities. The cofactor is [2Fe-2S] cluster.

In terms of biological role, component of the chloroacetanilide N-alkylformylase multicomponent enzyme system involved in the degradation of chloroacetanilide herbicides (N-alkoxyalkyl-N-chloroacetyl-substituted aniline derivatives). In vitro, functions as an intermediate electron transfer protein. The polypeptide is Chloroacetanilide N-alkylformylase 1, ferredoxin component (Rhizorhabdus wittichii (strain DC-6 / KACC 16600) (Sphingomonas wittichii)).